Reading from the N-terminus, the 380-residue chain is Bifunctional dihydropteroate synthase/dihydropteroate reductase (380 aa).

The interval 1–104 (MIVKRLNPDA…SQPFGLKHLA (104 aa)) is dihydropteroate reductase. The interval 105-380 (QELKSHLKAP…KVFKSLEETD (276 aa)) is dihydropteroate synthase. Residues 119-371 (PQIMAVLNLT…DIDEHIDLIK (253 aa)) form the Pterin-binding domain. Residue N126 coordinates Mg(2+). Residues D202, N221, D289, K325, and 359–361 (RVH) each bind (7,8-dihydropterin-6-yl)methyl diphosphate.

The protein in the C-terminal section; belongs to the DHPS family. Requires FAD as cofactor. The cofactor is FMN. Mg(2+) is required as a cofactor.

The enzyme catalyses (7,8-dihydropterin-6-yl)methyl diphosphate + 4-aminobenzoate = 7,8-dihydropteroate + diphosphate. It catalyses the reaction (6S)-5,6,7,8-tetrahydropteroate + NAD(+) = 7,8-dihydropteroate + NADH + H(+). It functions in the pathway cofactor biosynthesis; tetrahydrofolate biosynthesis; 7,8-dihydrofolate from 2-amino-4-hydroxy-6-hydroxymethyl-7,8-dihydropteridine diphosphate and 4-aminobenzoate: step 1/2. Functionally, bifunctional enzyme that catalyzes the formation of dihydropteroate, the immediate precursor of folic acid and the reduction of dihydropteroate to tetrahydropteroate. This Helicobacter pylori (strain ATCC 700392 / 26695) (Campylobacter pylori) protein is Bifunctional dihydropteroate synthase/dihydropteroate reductase.